Here is a 518-residue protein sequence, read N- to C-terminus: D-aminopeptidase (518 aa).

The Nucleophile role is filled by S62. Residue K65 is the Proton donor/acceptor of the active site. Residues 373–392 (FGTGPEKMDISGENEAQSSM) are disordered. Positions 477–487 (QRSMDAPSPGE) are important for specificity. Substrate is bound at residue D481.

This sequence belongs to the peptidase S12 family. As to quaternary structure, homodimer.

The catalysed reaction is Release of an N-terminal D-amino acid from a peptide, Xaa-|-Yaa-, in which Xaa is preferably D-Ala, D-Ser or D-Thr. D-amino acid amides and methyl esters also are hydrolyzed, as is glycine amide.. Its activity is regulated as follows. Inhibited by beta-lactam compounds such as 6-aminopenicillic acid, 7-aminocephalosporanic acid, benzylpenicillin and ampicillin. Inhibited by p-chloromercuribenzoate. Its function is as follows. Hydrolyzes N-terminal residues in D-amino acid-containing peptides. This chain is D-aminopeptidase, found in Brucella melitensis biotype 1 (strain ATCC 23456 / CCUG 17765 / NCTC 10094 / 16M).